Consider the following 210-residue polypeptide: Signal peptidase complex catalytic subunit SEC11 (210 aa).

Topologically, residues 1 to 14 (MLSSLSPHLSNVRQ) are cytoplasmic. A helical; Signal-anchor for type II membrane protein membrane pass occupies residues 15 to 31 (TLTQVLNFALVLSTAFM). Over 32-210 (MWKALSIYTN…MGVMVILQRE (179 aa)) the chain is Lumenal. Asparagine 41 is a glycosylation site (N-linked (GlcNAc...) asparagine). Residues serine 53 and histidine 92 each act as charge relay system in the active site. Positions 101-110 (DARDPKEGGG) are enriched in basic and acidic residues. A disordered region spans residues 101–124 (DARDPKEGGGKKGKSASGTGKKES). Catalysis depends on aspartate 152, which acts as the Charge relay system. Positions 196–207 (VLLGLMGVMVIL) are C-terminal short (CTS) helix.

The protein belongs to the peptidase S26B family. In terms of assembly, component of the signal peptidase complex (SPC) composed of a catalytic subunit SEC11 and three accessory subunits SPC1, SPC2 and SPC3. The complex induces a local thinning of the ER membrane which is used to measure the length of the signal peptide (SP) h-region of protein substrates. This ensures the selectivity of the complex towards h-regions shorter than 18-20 amino acids. SPC associates with the translocon complex.

Its subcellular location is the endoplasmic reticulum membrane. It catalyses the reaction Cleavage of hydrophobic, N-terminal signal or leader sequences from secreted and periplasmic proteins.. Catalytic component of the signal peptidase complex (SPC) which catalyzes the cleavage of N-terminal signal sequences from nascent proteins as they are translocated into the lumen of the endoplasmic reticulum. Specifically cleaves N-terminal signal peptides that contain a hydrophobic alpha-helix (h-region) shorter than 18-20 amino acids. This Uncinocarpus reesii (strain UAMH 1704) protein is Signal peptidase complex catalytic subunit SEC11 (SEC11).